Reading from the N-terminus, the 238-residue chain is MVKLFSYKIKYYLTAFFIIIIQSCASVEHKPLVDGITTAIAPNIIPKIKNGSLFQEKTPINYGYQPLFEDHRSHNIGDTITVVLQENISASNSSSSNLTRDGKANVGVTVTPGTLNPILGLNVNDNKTGIDSIGKNDFSGKGSNSAKNTFTGLITVTVKNVLPNGNLKVIGEKQVAINQGTEFIRFSGVINPNNINKNNLVASTQIADTRIEYVSNNRINDIQKMGWLQRFLLKISPI.

Residues 1–23 form the signal peptide; sequence MVKLFSYKIKYYLTAFFIIIIQS. C24 carries the N-palmitoyl cysteine lipid modification. C24 carries S-diacylglycerol cysteine lipidation.

This sequence belongs to the FlgH family. The basal body constitutes a major portion of the flagellar organelle and consists of four rings (L,P,S, and M) mounted on a central rod.

Its subcellular location is the cell outer membrane. The protein localises to the bacterial flagellum basal body. Functionally, assembles around the rod to form the L-ring and probably protects the motor/basal body from shearing forces during rotation. This Buchnera aphidicola subsp. Schizaphis graminum (strain Sg) protein is Flagellar L-ring protein.